A 236-amino-acid polypeptide reads, in one-letter code: tRNA1(Val) (adenine(37)-N6)-methyltransferase (236 aa).

It belongs to the methyltransferase superfamily. tRNA (adenine-N(6)-)-methyltransferase family.

The protein resides in the cytoplasm. The catalysed reaction is adenosine(37) in tRNA1(Val) + S-adenosyl-L-methionine = N(6)-methyladenosine(37) in tRNA1(Val) + S-adenosyl-L-homocysteine + H(+). Specifically methylates the adenine in position 37 of tRNA(1)(Val) (anticodon cmo5UAC). The protein is tRNA1(Val) (adenine(37)-N6)-methyltransferase of Actinobacillus succinogenes (strain ATCC 55618 / DSM 22257 / CCUG 43843 / 130Z).